The primary structure comprises 398 residues: ATP-dependent RNA helicase eIF4A (398 aa).

The short motif at 25-53 is the Q motif element; that stretch reads DSFDAMNLRAELLRGVYAYGFERPSAIQQ. The 171-residue stretch at 56 to 226 folds into the Helicase ATP-binding domain; sequence IMPVIKGSDV…TKFMRDPVRI (171 aa). Residue 69 to 76 participates in ATP binding; it reads AQSGTGKT. The DEAD box motif lies at 174 to 177; sequence DEAD. The Helicase C-terminal domain maps to 237–398; it reads GIKQFYIAVE…EMPMNVADLI (162 aa).

It belongs to the DEAD box helicase family. eIF4A subfamily. As to quaternary structure, component of the eIF4F complex, which composition varies with external and internal environmental conditions. It is composed of at least eIF4A, eIF4E and eIF4G.

The protein localises to the cytoplasm. It carries out the reaction ATP + H2O = ADP + phosphate + H(+). In terms of biological role, ATP-dependent RNA helicase which is a subunit of the eIF4F complex involved in cap recognition and is required for mRNA binding to ribosome. In the current model of translation initiation, eIF4A unwinds RNA secondary structures in the 5'-UTR of mRNAs which is necessary to allow efficient binding of the small ribosomal subunit, and subsequent scanning for the initiator codon. This is ATP-dependent RNA helicase eIF4A (TIF1) from Coccidioides immitis (strain RS) (Valley fever fungus).